A 101-amino-acid polypeptide reads, in one-letter code: Small ribosomal subunit protein uS14 (101 aa).

This sequence belongs to the universal ribosomal protein uS14 family. As to quaternary structure, part of the 30S ribosomal subunit. Contacts proteins S3 and S10.

Functionally, binds 16S rRNA, required for the assembly of 30S particles and may also be responsible for determining the conformation of the 16S rRNA at the A site. The sequence is that of Small ribosomal subunit protein uS14 from Burkholderia lata (strain ATCC 17760 / DSM 23089 / LMG 22485 / NCIMB 9086 / R18194 / 383).